A 284-amino-acid chain; its full sequence is uncharacterized protein (284 aa).

The N-terminal stretch at 1-24 is a signal peptide; sequence MLYSRESRTTVLFLALVTSLTVLC. Topologically, residues 25–84 are cytoplasmic; sequence HSVDVTTVFTTSTITEITTVTAAPQPQNKAETALNTATNIIQTMQFLFNCAPFKWKGPLK. The chain crosses the membrane as a helical span at residues 85 to 104; sequence ITSCALNFIVLLLTAWGYLL. The Extracellular portion of the chain corresponds to 105-284; the sequence is KYLQENKLNS…SVHMYSSSLL (180 aa). Asparagine 270 carries N-linked (GlcNAc...) asparagine glycosylation.

This sequence to yeast YNL019c.

Its subcellular location is the cell membrane. This is an uncharacterized protein from Saccharomyces cerevisiae (strain ATCC 204508 / S288c) (Baker's yeast).